A 124-amino-acid chain; its full sequence is Small ribosomal subunit protein uS12 (124 aa).

Residue Asp89 is modified to 3-methylthioaspartic acid.

The protein belongs to the universal ribosomal protein uS12 family. In terms of assembly, part of the 30S ribosomal subunit. Contacts proteins S8 and S17. May interact with IF1 in the 30S initiation complex.

In terms of biological role, with S4 and S5 plays an important role in translational accuracy. Interacts with and stabilizes bases of the 16S rRNA that are involved in tRNA selection in the A site and with the mRNA backbone. Located at the interface of the 30S and 50S subunits, it traverses the body of the 30S subunit contacting proteins on the other side and probably holding the rRNA structure together. The combined cluster of proteins S8, S12 and S17 appears to hold together the shoulder and platform of the 30S subunit. The polypeptide is Small ribosomal subunit protein uS12 (Shewanella sediminis (strain HAW-EB3)).